Consider the following 238-residue polypeptide: Adapter protein MecA (238 aa).

Over residues 120–136 (QQQKDNKQNQDQNERNR) the composition is skewed to basic and acidic residues. A disordered region spans residues 120 to 139 (QQQKDNKQNQDQNERNRQNT).

The protein belongs to the MecA family. Homodimer.

Its function is as follows. Enables the recognition and targeting of unfolded and aggregated proteins to the ClpC protease or to other proteins involved in proteolysis. This Staphylococcus saprophyticus subsp. saprophyticus (strain ATCC 15305 / DSM 20229 / NCIMB 8711 / NCTC 7292 / S-41) protein is Adapter protein MecA.